We begin with the raw amino-acid sequence, 272 residues long: MAVLLRTTTSATTATSGGSSSATALLATTFRRGGRRLLLLPATRGSAPRRAALLTARASAEPLEVCAKASLTVPDRLGDCPFTQRVLLTIEEKHLPYDIKLVDLANKPDWFLKISPEGKVPIVKLEEQWVADSDVITQAIEEKYPEPSLATPPEKASVGSKIFSTFIGFLKSKDPNDGTEQALLSELTSFDSYLKDNGPFINGETISAADLSLAPKLYHMEIALGHYKNWSVPDSLSHVKKYMKTIFSMDSFVKTIALQEDVIAGWRPKVMG.

A chloroplast-targeting transit peptide spans 1–57 (MAVLLRTTTSATTATSGGSSSATALLATTFRRGGRRLLLLPATRGSAPRRAALLTAR). Glutathione contacts are provided by lysine 68 and aspartate 79. The L-ascorbate site is built by lysine 68 and aspartate 79. One can recognise a GST N-terminal domain in the interval 70–148 (SLTVPDRLGD…AIEEKYPEPS (79 aa)). Residue cysteine 80 is the Nucleophile of the active site. Glutathione-binding residues include lysine 107, valine 120, serine 133, histidine 219, and tryptophan 266. Positions 126 to 272 (EEQWVADSDV…IAGWRPKVMG (147 aa)) constitute a GST C-terminal domain. An L-ascorbate-binding site is contributed by lysine 269.

It belongs to the GST superfamily. DHAR family. As to quaternary structure, monomer.

Its subcellular location is the plastid. The protein localises to the chloroplast. The enzyme catalyses RX + glutathione = an S-substituted glutathione + a halide anion + H(+). The catalysed reaction is L-dehydroascorbate + 2 glutathione = glutathione disulfide + L-ascorbate. In terms of biological role, involved in ascorbate homeostasis. Maintains redox pools of ascorbate by recycling dihydroascorbate (DHA) to ascorbate. Involved in scavenging reactive oxygen species (ROS) under oxidative stresses. The polypeptide is Probable glutathione S-transferase DHAR2, chloroplastic (Oryza sativa subsp. japonica (Rice)).